The chain runs to 62 residues: MASVCDICSKGPGFGNRISHSHRRTRRRWNPNIQTVRTRVGGTPKRLNVCTSCIKAGKVDRF.

The protein belongs to the bacterial ribosomal protein bL28 family.

The chain is Large ribosomal subunit protein bL28 from Thermobifida fusca (strain YX).